The primary structure comprises 137 residues: ER-derived vesicles protein erv14 (137 aa).

At 1–9 (MMSFGSFVY) the chain is on the cytoplasmic side. A helical transmembrane segment spans residues 10–30 (IACLLLNGANMLLQIFCVIMF). The Extracellular segment spans residues 31–62 (SDLEMDYINPIDLCNKLNDLVMPEIISHTLVT). Residues 63–83 (LLLLLGKKWLLFLANLPLLVF) traverse the membrane as a helical segment. Over 84–114 (HANQVIHKTHILDATEIFRQLGRHKRDNFIK) the chain is Cytoplasmic. The helical transmembrane segment at 115 to 135 (VTFYLIMFFTLLYCMVMSLIQ) threads the bilayer. The Extracellular portion of the chain corresponds to 136–137 (EE).

This sequence belongs to the cornichon family.

The protein resides in the endoplasmic reticulum. It is found in the membrane. It localises to the golgi apparatus membrane. In terms of biological role, regulates export of the secretory proteins from the endoplasmic reticulum in COPII-coated vesicles. In Schizosaccharomyces pombe (strain 972 / ATCC 24843) (Fission yeast), this protein is ER-derived vesicles protein erv14 (erv14).